Consider the following 77-residue polypeptide: ATP synthase subunit c (77 aa).

2 helical membrane-spanning segments follow: residues 10 to 30 and 57 to 77; these read IAVALLIGFGAIGTAVGFGNM and GLIDAVAMIGVGIAMVLLFVL.

The protein belongs to the ATPase C chain family. As to quaternary structure, F-type ATPases have 2 components, F(1) - the catalytic core - and F(0) - the membrane proton channel. F(1) has five subunits: alpha(3), beta(3), gamma(1), delta(1), epsilon(1). F(0) has three main subunits: a(1), b(2) and c(10-14). The alpha and beta chains form an alternating ring which encloses part of the gamma chain. F(1) is attached to F(0) by a central stalk formed by the gamma and epsilon chains, while a peripheral stalk is formed by the delta and b chains.

It is found in the cell inner membrane. In terms of biological role, f(1)F(0) ATP synthase produces ATP from ADP in the presence of a proton or sodium gradient. F-type ATPases consist of two structural domains, F(1) containing the extramembraneous catalytic core and F(0) containing the membrane proton channel, linked together by a central stalk and a peripheral stalk. During catalysis, ATP synthesis in the catalytic domain of F(1) is coupled via a rotary mechanism of the central stalk subunits to proton translocation. Its function is as follows. Key component of the F(0) channel; it plays a direct role in translocation across the membrane. A homomeric c-ring of between 10-14 subunits forms the central stalk rotor element with the F(1) delta and epsilon subunits. The chain is ATP synthase subunit c from Pseudoalteromonas translucida (strain TAC 125).